A 384-amino-acid chain; its full sequence is 1-deoxy-D-xylulose 5-phosphate reductoisomerase (384 aa).

NADPH contacts are provided by T10, G11, S12, I13, R37, N38, and N124. Residue K125 participates in 1-deoxy-D-xylulose 5-phosphate binding. NADPH is bound at residue E126. D150 is a binding site for Mn(2+). Residues S151, E152, S176, and H199 each contribute to the 1-deoxy-D-xylulose 5-phosphate site. E152 contacts Mn(2+). An NADPH-binding site is contributed by G205. 1-deoxy-D-xylulose 5-phosphate is bound by residues S212, N217, K218, and E221. Residue E221 coordinates Mn(2+).

Belongs to the DXR family. It depends on Mg(2+) as a cofactor. Requires Mn(2+) as cofactor.

It catalyses the reaction 2-C-methyl-D-erythritol 4-phosphate + NADP(+) = 1-deoxy-D-xylulose 5-phosphate + NADPH + H(+). Its pathway is isoprenoid biosynthesis; isopentenyl diphosphate biosynthesis via DXP pathway; isopentenyl diphosphate from 1-deoxy-D-xylulose 5-phosphate: step 1/6. In terms of biological role, catalyzes the NADPH-dependent rearrangement and reduction of 1-deoxy-D-xylulose-5-phosphate (DXP) to 2-C-methyl-D-erythritol 4-phosphate (MEP). The sequence is that of 1-deoxy-D-xylulose 5-phosphate reductoisomerase from Clostridium perfringens (strain SM101 / Type A).